The sequence spans 477 residues: uncharacterized protein (477 aa).

Positions 1 to 18 (MWTALVLVWISSVPLSRS) are cleaved as a signal peptide. At 19–427 (HTVPAVPRHL…DPLTPSLVNK (409 aa)) the chain is on the extracellular side. N-linked (GlcNAc...) asparagine glycans are attached at residues Asn40, Asn51, and Asn77. Disordered regions lie at residues 79-103 (TRVT…GTAD), 239-366 (GTIN…TGGP), and 378-398 (KATA…DVKV). Over residues 85–97 (TTPHGTNTSTPTT) the composition is skewed to low complexity. Polar residues-rich tracts occupy residues 253–288 (PAKS…QPVH) and 298–309 (PSNTTLEPNTPK). N-linked (GlcNAc...) asparagine glycosylation is present at Asn300. Low complexity-rich tracts occupy residues 310–326 (SVAS…QVQT), 348–361 (TSPT…LPTQ), and 378–393 (KATA…SRSS). Residues 428 to 448 (MFLLVVLIVGVTLFIAVLMMF) form a helical membrane-spanning segment. Over 449 to 477 (ALQAYESYKKKDYTQVDYLINGMYADSEM) the chain is Cytoplasmic.

Its subcellular location is the cell membrane. It localises to the golgi apparatus. The protein resides in the trans-Golgi network membrane. This is an uncharacterized protein from Rattus norvegicus (Rat).